Consider the following 1224-residue polypeptide: Dynactin subunit 1 (1224 aa).

The segment covering 1–10 (MAQSRRHPHG) has biased composition (basic residues). The tract at residues 1-30 (MAQSRRHPHGRASSAGPRMSTEASSKPLKV) is disordered. In terms of domain architecture, CAP-Gly spans 49-91 (GATLXATGKWVGVILDEAKGKNDGTVQGRKYFTCEENHGIFVR). Disordered regions lie at residues 100–217 (DGAD…RSQV), 374–402 (SASEKQEHVKLQKQMEKKNTELESLRQQR), and 888–918 (PHCHHEQDATAMQEGEYDADRPQSKPTPPAE). Positions 117 to 146 (VPKRHSRXAAKGSKLRGAKPKKTTARRPKP) are enriched in basic residues. The segment covering 148 to 180 (RTPTSAPSSGTAGPSGSASASGGEMSSSEPSTP) has biased composition (low complexity). A coiled-coil region spans residues 205–540 (SPTKEEENLR…QEASAEKQQQ (336 aa)). The span at 207–217 (TKEEENLRSQV) shows a compositional bias: basic and acidic residues. Coiled-coil stretches lie at residues 936-1042 (LKLE…EGLR) and 1081-1117 (KDSPLLLQQIEALQLSIRHLKNENNRLKGAQMKLELA). Residues 1203-1224 (WCSSSRARASPPASACSPPRPS) are disordered. The span at 1204 to 1224 (CSSSRARASPPASACSPPRPS) shows a compositional bias: low complexity.

Belongs to the dynactin 150 kDa subunit family. As to quaternary structure, monomer and homodimer. Subunit of dynactin, a multiprotein complex part of a tripartite complex with dynein and a adapter, such as BICDL1, BICD2 or HOOK3. The dynactin complex is built around ACTR1A/ACTB filament and consists of an actin-related filament composed of a shoulder domain, a pointed end and a barbed end. Its length is defined by its flexible shoulder domain. The soulder is composed of 2 DCTN1 subunits, 4 DCTN2 and 2 DCTN3. DCTN1/p150(glued) binds directly to microtubules and to cytoplasmic dynein. As to expression, ubiquitously expressed.

The protein localises to the cytoplasm. The protein resides in the cytoskeleton. It is found in the microtubule organizing center. It localises to the centrosome. Its subcellular location is the centriole. The protein localises to the spindle. The protein resides in the cell cortex. Its function is as follows. Part of the dynactin complex that activates the molecular motor dynein for ultra-processive transport along microtubules. Plays a key role in dynein-mediated retrograde transport of vesicles and organelles along microtubules by recruiting and tethering dynein to microtubules. Binds to both dynein and microtubules providing a link between specific cargos, microtubules and dynein. Essential for targeting dynein to microtubule plus ends, recruiting dynein to membranous cargos and enhancing dynein processivity (the ability to move along a microtubule for a long distance without falling off the track). Can also act as a brake to slow the dynein motor during motility along the microtubule. Can regulate microtubule stability by promoting microtubule formation, nucleation and polymerization and by inhibiting microtubule catastrophe in neurons. Inhibits microtubule catastrophe by binding both to microtubules and to tubulin, leading to enhanced microtubule stability along the axon. Plays a role in metaphase spindle orientation. Plays a role in centriole cohesion and subdistal appendage organization and function. Its recruitment to the centriole in a KIF3A-dependent manner is essential for the maintenance of centriole cohesion and the formation of subdistal appendage. Also required for microtubule anchoring at the mother centriole. Plays a role in primary cilia formation. This Gallus gallus (Chicken) protein is Dynactin subunit 1 (DCTN1).